The sequence spans 380 residues: Putative 12-oxophytodienoate reductase 4 (380 aa).

FMN-binding positions include 36 to 38 (PLT), alanine 69, and glutamine 111. 183–186 (HGAH) is a binding site for substrate. The active-site Proton donor is tyrosine 188. An FMN-binding site is contributed by arginine 235. Arginine 276 contacts substrate. Residues glycine 306 and 327–328 (GR) each bind FMN.

This sequence belongs to the NADH:flavin oxidoreductase/NADH oxidase family. The cofactor is FMN.

Functionally, putative oxophytodienoate reductase that may be involved in the biosynthesis or metabolism of oxylipin signaling molecules. The sequence is that of Putative 12-oxophytodienoate reductase 4 (OPR4) from Oryza sativa subsp. japonica (Rice).